The chain runs to 492 residues: Cell death protein 6 (492 aa).

The segment covering 19–29 has biased composition (low complexity); that stretch reads GNNINGEGSSS. The segment at 19–38 is disordered; that stretch reads GNNINGEGSSSPSTSAPQVK. The region spanning 55–215 is the PID domain; the sequence is INGHVEYVAR…YILKKKIVEL (161 aa). Disordered stretches follow at residues 241 to 385 and 464 to 492; these read TGPP…STAA and TGDL…NLKQ. Positions 244-268 are enriched in pro residues; that stretch reads PIYPGLGPPALPLSPMPQGPPPNIP. The segment covering 300-312 has biased composition (low complexity); the sequence is ASPSVSPASTSPS. Residues 313–333 show a composition bias toward pro residues; that stretch reads GPAPSIPPPRPPALAPPPPVA. The span at 373-383 shows a compositional bias: basic and acidic residues; that stretch reads FDPRAGEKKST.

This sequence belongs to the ced-6 family. In terms of assembly, homodimer. Interacts with ced-1. Interacts with E3 ubiquitin-protein ligase trim-21. In terms of tissue distribution, detected in gonadal sheath cells.

Its subcellular location is the cytoplasm. Its function is as follows. May function as an adapter protein in a pathway that mediates recognition and phagocytosis of apoptotic cells during normal development. Promotes engulfment of cells at both early and late stages of apoptosis. Required for actin reorganization around apoptotic cells. Plays a role in protecting dopaminergic neurons from oxidative stress-induced degeneration. Mediates recruitment of E3 ubiquitin-protein ligase trim-21 to the apoptotic cell surface which promotes ubiquitination and degradation of ced-1. This Caenorhabditis elegans protein is Cell death protein 6.